We begin with the raw amino-acid sequence, 434 residues long: Beta-enolase (434 aa).

Alanine 2 is modified (N-acetylalanine). A Phosphothreonine modification is found at threonine 72. Phosphoserine occurs at positions 83 and 157. Substrate-binding residues include histidine 158 and glutamate 167. Phosphoserine is present on serine 176. Threonine 205 carries the phosphothreonine modification. Residue glutamate 210 is the Proton donor of the active site. Threonine 229 is modified (phosphothreonine). The residue at position 236 (tyrosine 236) is a Phosphotyrosine. Aspartate 245 contacts Mg(2+). The residue at position 263 (serine 263) is a Phosphoserine. Residues glutamate 293 and aspartate 318 each coordinate substrate. Residues glutamate 293 and aspartate 318 each contribute to the Mg(2+) site. Lysine 343 functions as the Proton acceptor in the catalytic mechanism. Substrate is bound by residues 370–373 (SHRS) and lysine 394.

This sequence belongs to the enolase family. Mammalian enolase is composed of 3 isozyme subunits, alpha, beta and gamma, which can form homodimers or heterodimers which are cell-type and development-specific. Interacts with PNKD. Requires Mg(2+) as cofactor. The alpha/alpha homodimer is expressed in embryo and in most adult tissues. The alpha/beta heterodimer and the beta/beta homodimer are found in striated muscle, and the alpha/gamma heterodimer and the gamma/gamma homodimer in neurons.

It is found in the cytoplasm. It catalyses the reaction (2R)-2-phosphoglycerate = phosphoenolpyruvate + H2O. It functions in the pathway carbohydrate degradation; glycolysis; pyruvate from D-glyceraldehyde 3-phosphate: step 4/5. Glycolytic enzyme that catalyzes the conversion of 2-phosphoglycerate to phosphoenolpyruvate. Appears to have a function in striated muscle development and regeneration. The polypeptide is Beta-enolase (ENO3) (Oryctolagus cuniculus (Rabbit)).